The following is a 796-amino-acid chain: Bud site selection protein 27 (796 aa).

A coiled-coil region spans residues 81–121; it reads KEEAITFVDDKLKLMEDAIEQFNLKIEEAKKTLDNLNHMED. The segment covering 152 to 168 has biased composition (polar residues); that stretch reads VISSSVTPTTKQPSQSN. Disordered stretches follow at residues 152-197, 300-344, 421-458, 535-624, and 752-796; these read VISS…EENL, LRAQ…QVGF, EGEA…TTRS, EKEP…AKTG, and ATAS…DSKP. Basic and acidic residues-rich tracts occupy residues 169-197 and 306-318; these read SKKE…EENL and SQDH…DVNK. Residues 427–441 show a composition bias toward basic residues; the sequence is SNRRTRVSRFRKDRA. Residues 535–550 show a composition bias toward basic and acidic residues; the sequence is EKEPEINSKSEFETPF. Residues 551–568 are compositionally biased toward basic residues; that stretch reads KKKKLKSLQKPRSSKSMK. Residues 579–589 are compositionally biased toward acidic residues; that stretch reads ISDDDYDDDDD. Ser580 is subject to Phosphoserine. The segment covering 601–610 has biased composition (basic and acidic residues); that stretch reads NNTDEQDKFP.

The protein belongs to the prefoldin subunit alpha family.

Its subcellular location is the cytoplasm. In terms of biological role, involved in gene expression controlled by TOR kinase and nutrient signaling. May also be involved in positioning the proximal bud pole signal. The protein is Bud site selection protein 27 (BUD27) of Saccharomyces cerevisiae (strain ATCC 204508 / S288c) (Baker's yeast).